The sequence spans 180 residues: Inner membrane-spanning protein YciB (180 aa).

A run of 5 helical transmembrane segments spans residues 22–42 (IYVASGALVAATAVALVLTWL), 50–70 (MTLITFIMVAIFGTLTLVFHN), 76–96 (WKVTVIYTLFALALLISQVVL), 121–141 (AAWALFFLGCGLANIYVAFWL), and 149–169 (FKVFGLTALTLVFTLLSGIYI).

It belongs to the YciB family.

It localises to the cell inner membrane. Plays a role in cell envelope biogenesis, maintenance of cell envelope integrity and membrane homeostasis. This is Inner membrane-spanning protein YciB from Edwardsiella ictaluri (strain 93-146).